A 185-amino-acid chain; its full sequence is Translocon-associated protein subunit gamma (185 aa).

Met-1 carries the post-translational modification N-acetylmethionine. Over 1–27 (MAPKGGSKQQSEEDLLLQDFSRNLSAK) the chain is Lumenal. Residues Ser-7 and Ser-11 each carry the phosphoserine modification. The chain crosses the membrane as a helical span at residues 28-48 (SSALFFGNAFIVSAIPIWLYW). The Cytoplasmic portion of the chain corresponds to 49–54 (RIWHMD). A helical membrane pass occupies residues 55 to 76 (LIQSAVLYSVMTLVSTYLVAFA). Over 77 to 135 (YKNVKFVLKHKVAQKREDAVSKEVTRKLSEADNRKMSRKEKDERILWKKNEVADYEATT) the chain is Lumenal. A Phosphoserine modification is found at Ser-105. A helical membrane pass occupies residues 136–157 (FSIFYNNTLFLVLVIVASFFIL). Residues 158–163 (KNFNPT) are Cytoplasmic-facing. A helical transmembrane segment spans residues 164-184 (VNYILSISASSGLIALLSTGS).

The protein belongs to the TRAP-gamma family. Heterotetramer of TRAP-alpha, TRAP-beta, TRAP-delta and TRAP-gamma.

The protein resides in the endoplasmic reticulum membrane. TRAP proteins are part of a complex whose function is to bind calcium to the ER membrane and thereby regulate the retention of ER resident proteins. In Mus musculus (Mouse), this protein is Translocon-associated protein subunit gamma (Ssr3).